We begin with the raw amino-acid sequence, 389 residues long: Mitochondrial tRNA-specific 2-thiouridylase 1 (389 aa).

ATP is bound by residues 8–15 and Met-34; that span reads GVSGGVDS. The interval 94-96 is interaction with target base in tRNA; it reads NPD. Cys-99 functions as the Nucleophile in the catalytic mechanism. Cys-99 and Cys-205 form a disulfide bridge. Gly-124 is an ATP binding site. An interaction with tRNA region spans residues 154–156; that stretch reads KDQ. Cys-205 acts as the Cysteine persulfide intermediate in catalysis. Residues 317–318 form an interaction with tRNA region; that stretch reads QH.

Belongs to the MnmA/TRMU family.

It is found in the mitochondrion. The enzyme catalyses 5-taurinomethyluridine(34) in tRNA + S-sulfanyl-L-cysteinyl-[protein] + AH2 + ATP = 5-taurinomethyl-2-thiouridine(34) in tRNA + L-cysteinyl-[protein] + A + AMP + diphosphate + H(+). Catalyzes the 2-thiolation of uridine at the wobble position (U34) of mitochondrial tRNA(Lys), tRNA(Glu) and tRNA(Gln). Required for the formation of 5-taurinomethyl-2-thiouridine (tm5s2U) of mitochondrial tRNA(Lys), tRNA(Glu), and tRNA(Gln) at the wobble position. ATP is required to activate the C2 atom of the wobble base. The chain is Mitochondrial tRNA-specific 2-thiouridylase 1 from Drosophila melanogaster (Fruit fly).